We begin with the raw amino-acid sequence, 110 residues long: U-scoloptoxin(16)-Er7a (110 aa).

An N-terminal signal peptide occupies residues 1–26 (MTSTRKLSVSCLIVFMVSSLIAVSSG).

The protein belongs to the scoloptoxin-16 family. In terms of processing, contains 4 disulfide bonds. In terms of tissue distribution, expressed by the venom gland.

The protein localises to the secreted. In Ethmostigmus rubripes (Giant centipede), this protein is U-scoloptoxin(16)-Er7a.